A 608-amino-acid polypeptide reads, in one-letter code: Growth hormone receptor (608 aa).

Residues 1–16 (MDLRHLLFTLALVCAN) form the signal peptide. Residues 17–237 (DSLSASDDLL…EFVHCAEEIE (221 aa)) lie on the Extracellular side of the membrane. 2 cysteine pairs are disulfide-bonded: cysteine 34–cysteine 44 and cysteine 72–cysteine 83. Asparagine 86 carries an N-linked (GlcNAc...) asparagine glycan. Residues cysteine 97 and cysteine 111 are joined by a disulfide bond. One can recognise a Fibronectin type-III domain in the interval 122–226 (PPVHLNWTLL…ILYVSFTQAG (105 aa)). N-linked (GlcNAc...) asparagine glycans are attached at residues asparagine 127, asparagine 132, and asparagine 171. The short motif at 211 to 215 (FGEFS) is the WSXWS motif element. The helical transmembrane segment at 238 to 261 (FPWFLVVVFGVCGLAVTAILILLS) threads the bilayer. Topologically, residues 262–608 (KQPRLKMLIF…STDQLNKIMP (347 aa)) are cytoplasmic. Residues 267 to 352 (KMLIFPPVPV…HLKSHSCLGA (86 aa)) form a required for JAK2 binding region. The short motif at 270–278 (IFPPVPVPK) is the Box 1 motif element. The UbE motif signature appears at 313-322 (DLWVEFIELD). 2 stretches are compositionally biased toward polar residues: residues 413-426 (ANTD…STQS) and 438-451 (STDS…TQLS). Residues 413–451 (ANTDTQQPHTSTQSESRESWPPFADSTDSANPSVQTQLS) form a disordered region.

It belongs to the type I cytokine receptor family. Type 1 subfamily. In terms of processing, on GH binding, proteolytically cleaved, in vitro, to produce GHBP. In terms of tissue distribution, broad specificity.

It is found in the cell membrane. Its subcellular location is the secreted. Its function is as follows. Receptor for pituitary gland growth hormone (GH1) involved in regulating postnatal body growth. On ligand binding, couples to the JAK2/STAT5 pathway. Functionally, the soluble form (GHBP) acts as a reservoir of growth hormone in plasma and may be a modulator/inhibitor of GH signaling. This Gallus gallus (Chicken) protein is Growth hormone receptor (GHR).